The primary structure comprises 416 residues: Homogentisate 1,2-dioxygenase (416 aa).

His275 (proton acceptor) is an active-site residue. Positions 318 and 324 each coordinate Fe cation. Tyr333 and His354 together coordinate homogentisate. Position 354 (His354) interacts with Fe cation.

Belongs to the homogentisate dioxygenase family. In terms of assembly, hexamer; dimer of trimers. Fe cation serves as cofactor.

The catalysed reaction is homogentisate + O2 = 4-maleylacetoacetate + H(+). The protein operates within amino-acid degradation; L-phenylalanine degradation; acetoacetate and fumarate from L-phenylalanine: step 4/6. Involved in the catabolism of homogentisate (2,5-dihydroxyphenylacetate or 2,5-OH-PhAc), a central intermediate in the degradation of phenylalanine and tyrosine. Catalyzes the oxidative ring cleavage of the aromatic ring of homogentisate to yield maleylacetoacetate. The protein is Homogentisate 1,2-dioxygenase of Legionella pneumophila (strain Lens).